Here is a 489-residue protein sequence, read N- to C-terminus: MEAPDCEVLSVREQLFHERIRECIISTLLFATLYILCHIFLTRFKKPAEFTTVDDADATVNKIALELCTFTLAIALGAVLLLPFSIISNEVLLSLPRNYYIQWLNGSLIHGLWNLVFLFSNLSLIFLMPFAYFFTESEGFAGSRKGVLGRVYETVVMLMLLTLLVLGMVWVASAIVDNNKASRESLYDFWEYYLPYLYSCISFLGVLLLLVCTPLGLARMFSVTGKLLVKPRLLEDLEEQLYCSAFEEAALTRRICNPTSCWLPLDMELLHRQLLALQTQRVLLEKRRKASAWQRNLGYPLAMLCLLVLTGLSVLIVAIHILELLIDEAAMPRGMQGASLGQVSFSKLGSFGAVVQVVLIFYLMVSSVVGFYSSPLFRSLRPRWHDTAMTQIIGNCVCLLVLSSALPVFSRTLGLTRFDLLGDFGRFNWLGNFYIVFLYNAAFAGLTTLCLVKTFTAAVRAELIRAFGLDRLPLPVSGFPRASRKTQHQ.

At 1 to 21 (MEAPDCEVLSVREQLFHERIR) the chain is on the extracellular side. Residues 1 to 59 (MEAPDCEVLSVREQLFHERIRECIISTLLFATLYILCHIFLTRFKKPAEFTTVDDADAT) are interaction with LGB. The interval 1–76 (MEAPDCEVLS…LCTFTLAIAL (76 aa)) is LCN1-binding. The chain crosses the membrane as a helical span at residues 22–42 (ECIISTLLFATLYILCHIFLT). Residues 43–66 (RFKKPAEFTTVDDADATVNKIALE) lie on the Cytoplasmic side of the membrane. The helical transmembrane segment at 67–87 (LCTFTLAIALGAVLLLPFSII) threads the bilayer. Residues 88–114 (SNEVLLSLPRNYYIQWLNGSLIHGLWN) are Extracellular-facing. Residues 115–135 (LVFLFSNLSLIFLMPFAYFFT) form a helical membrane-spanning segment. At 136 to 154 (ESEGFAGSRKGVLGRVYET) the chain is on the cytoplasmic side. A helical membrane pass occupies residues 155–175 (VVMLMLLTLLVLGMVWVASAI). Over 176 to 196 (VDNNKASRESLYDFWEYYLPY) the chain is Extracellular. The helical transmembrane segment at 197 to 217 (LYSCISFLGVLLLLVCTPLGL) threads the bilayer. Over 218–305 (ARMFSVTGKL…NLGYPLAMLC (88 aa)) the chain is Cytoplasmic. The helical transmembrane segment at 306 to 326 (LLVLTGLSVLIVAIHILELLI) threads the bilayer. The Extracellular segment spans residues 327–350 (DEAAMPRGMQGASLGQVSFSKLGS). The helical transmembrane segment at 351 to 371 (FGAVVQVVLIFYLMVSSVVGF) threads the bilayer. The Cytoplasmic portion of the chain corresponds to 372 to 388 (YSSPLFRSLRPRWHDTA). The helical transmembrane segment at 389–409 (MTQIIGNCVCLLVLSSALPVF) threads the bilayer. Residues 410-431 (SRTLGLTRFDLLGDFGRFNWLG) are Extracellular-facing. Residues 432–452 (NFYIVFLYNAAFAGLTTLCLV) traverse the membrane as a helical segment. At 453–489 (KTFTAAVRAELIRAFGLDRLPLPVSGFPRASRKTQHQ) the chain is on the cytoplasmic side.

This sequence belongs to the LIMR family. Dimer. Can also form higher oligomers. Interacts with LCN1; this interaction mediates the endocytosis of LCN1. Interacts with UBAC2, FAF2, VCP, AMFR, ZNRF3, CTNNB1, LRP6, GSK3A, GSK3B, FZD6, DVL2 and RNF43. Interaction with LGB and SCGB1A1 is controversial.

Its subcellular location is the cell membrane. The protein localises to the endoplasmic reticulum membrane. Plays an essential role in lymphocyte development by negatively regulating the canonical Wnt signaling pathway. In association with UBAC2 and E3 ubiquitin-protein ligase AMFR, promotes the ubiquitin-mediated degradation of CTNNB1 and Wnt receptors FZD6 and LRP6. LMBR1L stabilizes the beta-catenin destruction complex that is required for regulating CTNNB1 levels. Acts as a LCN1 receptor and can mediate its endocytosis. This chain is Protein LMBR1L (LMBR1L), found in Macaca fascicularis (Crab-eating macaque).